The sequence spans 534 residues: Phosphoenolpyruvate carboxykinase (ATP) (534 aa).

The substrate site is built by Arg-58, Tyr-194, and Lys-200. Residues Lys-200, His-219, and 235 to 243 (GLSGTGKTT) each bind ATP. Positions 200 and 219 each coordinate Mn(2+). Mn(2+) is bound at residue Asp-256. 3 residues coordinate ATP: Glu-284, Arg-322, and Thr-449. Residue Arg-322 participates in substrate binding.

The protein belongs to the phosphoenolpyruvate carboxykinase (ATP) family. It depends on Mn(2+) as a cofactor.

It localises to the cytoplasm. It carries out the reaction oxaloacetate + ATP = phosphoenolpyruvate + ADP + CO2. It participates in carbohydrate biosynthesis; gluconeogenesis. Functionally, involved in the gluconeogenesis. Catalyzes the conversion of oxaloacetate (OAA) to phosphoenolpyruvate (PEP) through direct phosphoryl transfer between the nucleoside triphosphate and OAA. This chain is Phosphoenolpyruvate carboxykinase (ATP), found in Novosphingobium aromaticivorans (strain ATCC 700278 / DSM 12444 / CCUG 56034 / CIP 105152 / NBRC 16084 / F199).